We begin with the raw amino-acid sequence, 282 residues long: Serine/threonine-protein kinase Aurora-2 (282 aa).

A Protein kinase domain is found at 19 to 270; that stretch reads FDIGKPLGRG…LHKLLEHPWI (252 aa). ATP is bound by residues 25-33 and Lys48; that span reads LGRGKFGHV. Residue Asp142 is the Proton acceptor of the active site. At Ser164 the chain carries Phosphoserine. Thr173 carries the phosphothreonine modification.

Belongs to the protein kinase superfamily. Ser/Thr protein kinase family. Aurora subfamily. Post-translationally, phosphorylation at Thr-173 may regulate activity and degradation of AUR2 in a cell cycle dependent manner. As to expression, abundant in roots, flowers and flower buds, low or absent in expanded leaves, stems and siliques.

It localises to the nucleus membrane. It is found in the cytoplasm. Its subcellular location is the cytoskeleton. The protein localises to the spindle. The protein resides in the spindle pole. The enzyme catalyses L-seryl-[protein] + ATP = O-phospho-L-seryl-[protein] + ADP + H(+). The catalysed reaction is L-threonyl-[protein] + ATP = O-phospho-L-threonyl-[protein] + ADP + H(+). Its function is as follows. Phosphorylates specifically 'Ser-10' of histone H3 in vitro. Associates with cytoskeletal structures that are necessary for cytokinesis and with the microtubule spindle. Might colocalize with gamma-tubulin and function in microtubule organizing centers (MTOCs). The polypeptide is Serine/threonine-protein kinase Aurora-2 (AUR2) (Arabidopsis thaliana (Mouse-ear cress)).